We begin with the raw amino-acid sequence, 498 residues long: ATP synthase subunit beta, chloroplastic (498 aa).

Residue 172–179 coordinates ATP; sequence GGAGVGKT.

It belongs to the ATPase alpha/beta chains family. In terms of assembly, F-type ATPases have 2 components, CF(1) - the catalytic core - and CF(0) - the membrane proton channel. CF(1) has five subunits: alpha(3), beta(3), gamma(1), delta(1), epsilon(1). CF(0) has four main subunits: a(1), b(1), b'(1) and c(9-12).

Its subcellular location is the plastid. It localises to the chloroplast thylakoid membrane. It catalyses the reaction ATP + H2O + 4 H(+)(in) = ADP + phosphate + 5 H(+)(out). Its function is as follows. Produces ATP from ADP in the presence of a proton gradient across the membrane. The catalytic sites are hosted primarily by the beta subunits. The protein is ATP synthase subunit beta, chloroplastic of Trochodendron aralioides (Wheel tree).